Consider the following 96-residue polypeptide: Class I hydrophobin 2 (96 aa).

The signal sequence occupies residues 1 to 15 (MFKALIVALAAVAAA). 4 disulfide bridges follow: Cys-28/Cys-77, Cys-34/Cys-71, Cys-35/Cys-55, and Cys-78/Cys-91.

The protein belongs to the fungal hydrophobin family.

It localises to the secreted. It is found in the cell wall. Its function is as follows. Aerial growth, conidiation, and dispersal of filamentous fungi in the environment rely upon a capability of their secreting small amphipathic proteins called hydrophobins (HPBs) with low sequence identity. Class I can self-assemble into an outermost layer of rodlet bundles on aerial cell surfaces, conferring cellular hydrophobicity that supports fungal growth, development and dispersal; whereas Class II form highly ordered films at water-air interfaces through intermolecular interactions but contribute nothing to the rodlet structure. Hyd2 plays a neglectable role in hyphal growth and asexual development and does not seem involved in cellular hydrophobicity, conidial adhesion, stress tolerance nor insect pathogenicity. The chain is Class I hydrophobin 2 from Metarhizium robertsii (strain ARSEF 23 / ATCC MYA-3075) (Metarhizium anisopliae (strain ARSEF 23)).